Here is a 327-residue protein sequence, read N- to C-terminus: Cytochrome c biogenesis protein CcsA (327 aa).

The next 8 helical transmembrane spans lie at 13–33 (ISFS…LVNL), 46–66 (GIII…IYSG), 73–93 (LYES…VSYF), 101–121 (LNAI…SGLL), 145–165 (MILG…LLVI), 233–253 (IISL…VWAN), 262–282 (WDPK…YLHI), and 294–314 (AIVA…VNLL).

This sequence belongs to the CcmF/CycK/Ccl1/NrfE/CcsA family. May interact with Ccs1.

It is found in the plastid. The protein localises to the chloroplast thylakoid membrane. Required during biogenesis of c-type cytochromes (cytochrome c6 and cytochrome f) at the step of heme attachment. The sequence is that of Cytochrome c biogenesis protein CcsA from Lobularia maritima (Sweet alyssum).